Consider the following 378-residue polypeptide: Queuine tRNA-ribosyltransferase (378 aa).

Residue D91 is the Proton acceptor of the active site. Substrate contacts are provided by residues 91-95 (DSGGF), D145, Q189, and G216. The interval 247–253 (GVGKPED) is RNA binding. D266 functions as the Nucleophile in the catalytic mechanism. The tract at residues 271–275 (TRNAR) is RNA binding; important for wobble base 34 recognition. Zn(2+)-binding residues include C304, C306, C309, and H335.

Belongs to the queuine tRNA-ribosyltransferase family. In terms of assembly, homodimer. Within each dimer, one monomer is responsible for RNA recognition and catalysis, while the other monomer binds to the replacement base PreQ1. Zn(2+) serves as cofactor.

It carries out the reaction 7-aminomethyl-7-carbaguanine + guanosine(34) in tRNA = 7-aminomethyl-7-carbaguanosine(34) in tRNA + guanine. It participates in tRNA modification; tRNA-queuosine biosynthesis. Functionally, catalyzes the base-exchange of a guanine (G) residue with the queuine precursor 7-aminomethyl-7-deazaguanine (PreQ1) at position 34 (anticodon wobble position) in tRNAs with GU(N) anticodons (tRNA-Asp, -Asn, -His and -Tyr). Catalysis occurs through a double-displacement mechanism. The nucleophile active site attacks the C1' of nucleotide 34 to detach the guanine base from the RNA, forming a covalent enzyme-RNA intermediate. The proton acceptor active site deprotonates the incoming PreQ1, allowing a nucleophilic attack on the C1' of the ribose to form the product. After dissociation, two additional enzymatic reactions on the tRNA convert PreQ1 to queuine (Q), resulting in the hypermodified nucleoside queuosine (7-(((4,5-cis-dihydroxy-2-cyclopenten-1-yl)amino)methyl)-7-deazaguanosine). The sequence is that of Queuine tRNA-ribosyltransferase from Vibrio campbellii (strain ATCC BAA-1116).